Here is a 273-residue protein sequence, read N- to C-terminus: Orotidine 5'-phosphate decarboxylase (273 aa).

Catalysis depends on Lys-95, which acts as the Proton donor.

Belongs to the OMP decarboxylase family. Type 2 subfamily.

It catalyses the reaction orotidine 5'-phosphate + H(+) = UMP + CO2. Its pathway is pyrimidine metabolism; UMP biosynthesis via de novo pathway; UMP from orotate: step 2/2. The chain is Orotidine 5'-phosphate decarboxylase from Bordetella bronchiseptica (strain ATCC BAA-588 / NCTC 13252 / RB50) (Alcaligenes bronchisepticus).